A 265-amino-acid chain; its full sequence is Glutamate racemase (265 aa).

Substrate-binding positions include 12 to 13 (DS) and 44 to 45 (YG). The Proton donor/acceptor role is filled by Cys75. 76-77 (NT) contributes to the substrate binding site. Cys186 acts as the Proton donor/acceptor in catalysis. 187 to 188 (TH) provides a ligand contact to substrate.

This sequence belongs to the aspartate/glutamate racemases family.

The enzyme catalyses L-glutamate = D-glutamate. Its pathway is cell wall biogenesis; peptidoglycan biosynthesis. Functionally, provides the (R)-glutamate required for cell wall biosynthesis. The chain is Glutamate racemase from Pseudomonas paraeruginosa (strain DSM 24068 / PA7) (Pseudomonas aeruginosa (strain PA7)).